Here is a 1244-residue protein sequence, read N- to C-terminus: Alpha-protein kinase 1 (1244 aa).

ADP-D-glycero-beta-D-manno-heptose contacts are provided by residues F61, Q67, R116, 150–153 (RQAR), D231, K233, 236–237 (ST), and F295. Disordered stretches follow at residues 650–675 (LQEP…TPFS), 701–737 (VRNM…THPS), 757–798 (VKDR…TEDA), and 824–848 (NWPV…DPDA). Residues 652 to 675 (EPNNDNLEPSQNQPQQQMPLTPFS) are compositionally biased toward polar residues. Positions 713–726 (SRPSYRSASWSSDS) are enriched in low complexity. Positions 757-771 (VKDRQGKEQGEEISE) are enriched in basic and acidic residues. Residues 787 to 798 (PEGETAESTEDA) are compositionally biased toward acidic residues. The 221-residue stretch at 1017–1237 (KYSKKSELWT…ICHRLSLTRP (221 aa)) folds into the Alpha-type protein kinase domain.

It belongs to the protein kinase superfamily. Alpha-type protein kinase family. ALPK subfamily. Highly expressed in liver. Expressed in the optic nerve and retinal pigmented epithelium. Lower expression is observed in the macula and extramacular retina.

It localises to the cytoplasm. The protein resides in the cytosol. The protein localises to the cytoskeleton. It is found in the spindle pole. Its subcellular location is the microtubule organizing center. It localises to the centrosome. The protein resides in the cell projection. The protein localises to the cilium. The catalysed reaction is L-seryl-[protein] + ATP = O-phospho-L-seryl-[protein] + ADP + H(+). It carries out the reaction L-threonyl-[protein] + ATP = O-phospho-L-threonyl-[protein] + ADP + H(+). Serine/threonine-protein kinase activity is stimulated upon ADP-D-glycero-beta-D-manno-heptose (ADP-Heptose)-binding. Serine/threonine-protein kinase that detects bacterial pathogen-associated molecular pattern metabolites (PAMPs) and initiates an innate immune response, a critical step for pathogen elimination and engagement of adaptive immunity. Specifically recognizes and binds ADP-D-glycero-beta-D-manno-heptose (ADP-Heptose), a potent PAMP present in all Gram-negative and some Gram-positive bacteria. ADP-Heptose-binding stimulates its kinase activity to phosphorylate and activate TIFA, triggering pro-inflammatory NF-kappa-B signaling. May be involved in monosodium urate monohydrate (MSU)-induced inflammation by mediating phosphorylation of unconventional myosin MYO9A. May also play a role in apical protein transport by mediating phosphorylation of unconventional myosin MYO1A. May play a role in ciliogenesis. This Homo sapiens (Human) protein is Alpha-protein kinase 1.